The primary structure comprises 176 residues: Protein FAM89A (176 aa).

Residues 140 to 165 (DFQEQGSLRDGQGRGSPGDPSLPLTH) form a disordered region.

This sequence belongs to the FAM89 family.

This chain is Protein FAM89A (Fam89a), found in Rattus norvegicus (Rat).